The sequence spans 408 residues: MVQVNENYLKLKAGYLFPEIAKRVKIYSQSNKSAEIIKLGIGDVTEPLPRACIDAMSKALDDMGTAEGFRGYGPEQGYSWLREKISEHDFISRGCQILPEEIFVSDGSKCDSSNILDILGKDNSIAVTDPVYPVYVDSNVMTGRTGDALENGTYQGLTYLAINEGNNFLPELPQKKVDILYLCFPNNPTGATITKEELKKWVDYALQNKSLILFDAAYEAFIQDNDIPHSIYEIEGAKDCAIEFRSFSKNAGFTGVRCAFTVIPKNLKGLSSTNEEIDLWPLWNRRQSTKFNGVSYVVQRGAEAVYSLEGKKEVRGLIDFYMENAKIMKNKLQTAGYKVYGGDNAPYIWIKVPDQMTSWNFFDFLLQNVSVVGTPGSGFGLSGEGYFRLSAFNSRSNVLDAMERIINI.

Positions 15 and 42 each coordinate substrate. Residues Tyr-72, Ser-108 to Lys-109, Tyr-132, Asn-187, Tyr-218, and Ser-246 to Ser-248 contribute to the pyridoxal 5'-phosphate site. Positions 109, 132, and 187 each coordinate substrate. Lys-249 is subject to N6-(pyridoxal phosphate)lysine. Pyridoxal 5'-phosphate contacts are provided by Arg-257 and Asn-292. Positions 292 and 388 each coordinate substrate.

The protein belongs to the class-I pyridoxal-phosphate-dependent aminotransferase family. LL-diaminopimelate aminotransferase subfamily. As to quaternary structure, homodimer. It depends on pyridoxal 5'-phosphate as a cofactor.

It carries out the reaction (2S,6S)-2,6-diaminopimelate + 2-oxoglutarate = (S)-2,3,4,5-tetrahydrodipicolinate + L-glutamate + H2O + H(+). The protein operates within amino-acid biosynthesis; L-lysine biosynthesis via DAP pathway; LL-2,6-diaminopimelate from (S)-tetrahydrodipicolinate (aminotransferase route): step 1/1. Involved in the synthesis of meso-diaminopimelate (m-DAP or DL-DAP), required for both lysine and peptidoglycan biosynthesis. Catalyzes the direct conversion of tetrahydrodipicolinate to LL-diaminopimelate. This is LL-diaminopimelate aminotransferase from Prochlorococcus marinus (strain MIT 9312).